Here is a 301-residue protein sequence, read N- to C-terminus: NAD kinase 2 (301 aa).

The active-site Proton acceptor is the aspartate 77. Residues aspartate 77 to glycine 78, arginine 82, asparagine 151 to glutamate 152, arginine 162, aspartate 181, and threonine 192 to serine 197 each bind NAD(+).

The protein belongs to the NAD kinase family. The cofactor is a divalent metal cation.

The protein resides in the cytoplasm. The catalysed reaction is NAD(+) + ATP = ADP + NADP(+) + H(+). Functionally, involved in the regulation of the intracellular balance of NAD and NADP, and is a key enzyme in the biosynthesis of NADP. Catalyzes specifically the phosphorylation on 2'-hydroxyl of the adenosine moiety of NAD to yield NADP. This Streptomyces avermitilis (strain ATCC 31267 / DSM 46492 / JCM 5070 / NBRC 14893 / NCIMB 12804 / NRRL 8165 / MA-4680) protein is NAD kinase 2.